A 191-amino-acid polypeptide reads, in one-letter code: UPF0312 protein Sden_2128 (191 aa).

The N-terminal stretch at 1 to 22 (MKKHLLASLLGASLLLPTAVNA) is a signal peptide.

The protein belongs to the UPF0312 family. Type 1 subfamily.

It localises to the periplasm. The sequence is that of UPF0312 protein Sden_2128 from Shewanella denitrificans (strain OS217 / ATCC BAA-1090 / DSM 15013).